Consider the following 247-residue polypeptide: Particulate methane monooxygenase beta subunit (247 aa).

The next 6 membrane-spanning stretches (helical) occupy residues W23–L43, L59–L79, P86–F106, W111–L131, A145–A165, and V215–G235.

As to quaternary structure, m.capsulatus has two forms of methane monooxygenase, a soluble (sMMO) and a membrane-bound (particulate) type (pMMO). The particulate type is a nonamer composed of three alpha:beta:gamma heterotrimeric protomers assembled into a cylindrical structure; the beta and gamma subunits comprise the bulk of the membrane-spanning regions and the soluble regions are derived primarily from alpha subunits which form two antiparallel beta-barrel-like structures each. This assembly, also called pMMO hydroxylase (pMMO-H), is proposed to associate with methanol dehydrogenase (MDH), also designated as pMMO-R, to form the pMMO-C complex which seems to have greater methane monooxygenase activity.

It is found in the membrane. It catalyses the reaction methane + a quinol + O2 = methanol + a quinone + H2O. Non-catalytic subunit of the methane monooxygenase that is responsible for the initial oxygenation of methane to methanol in methanotrophs. At least in vitro, specific quinols can replace NADH as reductants. In Methylococcus capsulatus (strain ATCC 33009 / NCIMB 11132 / Bath), this protein is Particulate methane monooxygenase beta subunit (pmoA1).